A 443-amino-acid polypeptide reads, in one-letter code: Palmitoyltransferase pfa5 (443 aa).

2 helical membrane-spanning segments follow: residues 17–37 (IIPPILIGVFGYASYAITKPL) and 57–77 (AGAAILAIYYVLLIPVLATYL). The segment at 96-137 (CTQNQTGSDGSKHRHRRHRRRKSGHHLSKTTEKTDRSDGGDV) is disordered. Residues 107-123 (KHRHRRHRRRKSGHHLS) show a composition bias toward basic residues. Residues 124 to 137 (KTTEKTDRSDGGDV) show a composition bias toward basic and acidic residues. Positions 175-225 (VYCSTCCQFKTDRAHHCREVDRCVRKMDHFCPWVGGVVSETSFKFFIQFIV) constitute a DHHC domain. Transmembrane regions (helical) follow at residues 220 to 240 (FIQFIVYTMIYCIFVLIVFAI) and 256 to 276 (WIVCLALSSLFGFFTFGVAIS). The segment at 410-443 (AGLEVSTESESADPVGAAETPQHEQRRGKHRRRN) is disordered.

This sequence belongs to the DHHC palmitoyltransferase family. PFA5 subfamily. In terms of processing, autopalmitoylated.

The protein localises to the membrane. It carries out the reaction L-cysteinyl-[protein] + hexadecanoyl-CoA = S-hexadecanoyl-L-cysteinyl-[protein] + CoA. The protein is Palmitoyltransferase pfa5 (pfa5) of Aspergillus fumigatus (strain ATCC MYA-4609 / CBS 101355 / FGSC A1100 / Af293) (Neosartorya fumigata).